The chain runs to 261 residues: MRMTKRVLIAGFTGAMGQKAVNLVNSLSDFKIVAGLSPSAENDPQKYNLPEDAQIFNSLDEIPDNLTDIWIDFTLPKAVYNNVKFALTHHISPIVGTTGLSDGQEAELIEISKEEKVGGIIAPNFGISAVLLMKFAKEAAKYFPDVEIIEMHHADKKDAPSGTALATAKMIAENRPAHQTAPDEVETLENVRGGDYEGIKIHSVRLPGYVAHEQVLFGGTGEALTIRQDSFDRQSFMSGVKVALEKVDQLNELVVGLENIL.

NAD(+)-binding positions include 11-16 (GFTGAM), 96-98 (GTT), and 122-125 (APNF). The Proton donor/acceptor role is filled by His152. His153 contributes to the (S)-2,3,4,5-tetrahydrodipicolinate binding site. Lys156 acts as the Proton donor in catalysis. 162–163 (GT) contacts (S)-2,3,4,5-tetrahydrodipicolinate.

Belongs to the DapB family.

The protein resides in the cytoplasm. It carries out the reaction (S)-2,3,4,5-tetrahydrodipicolinate + NAD(+) + H2O = (2S,4S)-4-hydroxy-2,3,4,5-tetrahydrodipicolinate + NADH + H(+). The enzyme catalyses (S)-2,3,4,5-tetrahydrodipicolinate + NADP(+) + H2O = (2S,4S)-4-hydroxy-2,3,4,5-tetrahydrodipicolinate + NADPH + H(+). It participates in amino-acid biosynthesis; L-lysine biosynthesis via DAP pathway; (S)-tetrahydrodipicolinate from L-aspartate: step 4/4. Functionally, catalyzes the conversion of 4-hydroxy-tetrahydrodipicolinate (HTPA) to tetrahydrodipicolinate. This chain is 4-hydroxy-tetrahydrodipicolinate reductase, found in Lactobacillus acidophilus (strain ATCC 700396 / NCK56 / N2 / NCFM).